Reading from the N-terminus, the 403-residue chain is Calcium-responsive transactivator (403 aa).

An N-terminal auto-inhibitory domain region spans residues 1 to 148; it reads MSVAFASARP…TLPTTTMSMA (148 aa). Positions 50-53 match the SH2-binding motif; it reads YQQI. Disordered regions lie at residues 72–111, 152–171, 224–303, and 318–403; these read QSLLPAPPTQNMNLGPGGMSQTGPSQTLHSQGNLSEALGS, HGSAPGYSHTVPSSQNVPMQ, NQSS…RTFE, and SQQQ…NYQQ. 2 stretches are compositionally biased toward polar residues: residues 92-105 and 161-171; these read QTGPSQTLHSQGNL and TVPSSQNVPMQ. The interval 149–238 is methionine-rich intra-molecular domain; the sequence is VSTHGSAPGY…GSSMMGQRPL (90 aa). The span at 224–235 shows a compositional bias: low complexity; it reads NQSSQGSSMMGQ. An MFD domain region spans residues 252–324; that stretch reads YLGQEEYYSE…AQYSQQQTGY (73 aa). A compositionally biased stretch (polar residues) spans 263 to 277; it reads YGHSQGSSEAMTPQY. Low complexity predominate over residues 286–296; the sequence is YSYQQSSYGEQ. The interval 341–403 is necessary for nuclear localization; sequence NQQNYPGQQQ…EQGQYGNYQQ (63 aa). Positions 360–363 match the SH2-binding motif; that stretch reads SQYS. The SH3-binding motif lies at 378 to 386; it reads TSQTTSTAQ. The short motif at 398 to 401 is the SH2-binding element; that stretch reads YGNY.

The protein belongs to the SS18 family. As to quaternary structure, homodimer.

Its subcellular location is the nucleus. In terms of biological role, transcriptional activator which may be required for calcium-dependent dendritic growth and branching in cortical neurons. This Xenopus laevis (African clawed frog) protein is Calcium-responsive transactivator (ss18l1).